The primary structure comprises 289 residues: tRNA acetyltransferase TAN1 (289 aa).

Basic and acidic residues predominate over residues 1–10; the sequence is MGEKRNRNGK. Disordered regions lie at residues 1–31 and 64–83; these read MGEKRNRNGKDANSQNRKKFKVSSGFLDPGT and DIKEGEDESENDEKKDLSIE. Ser72 is modified (phosphoserine). Positions 146–259 constitute a THUMP domain; that stretch reads ADPKNMVKRT…KSNIGMCVVD (114 aa).

It localises to the cytoplasm. The protein localises to the nucleus. Probable tRNA acetyltransferase required for the formation of the modified nucleoside N(4)-acetylcytidine in serine and leucine tRNAs. Binds RNA. This is tRNA acetyltransferase TAN1 (TAN1) from Saccharomyces cerevisiae (strain ATCC 204508 / S288c) (Baker's yeast).